We begin with the raw amino-acid sequence, 89 residues long: Cell division protein ZapA (89 aa).

This sequence belongs to the ZapA family. Type 2 subfamily. Homodimer. Interacts with FtsZ.

The protein resides in the cytoplasm. Activator of cell division through the inhibition of FtsZ GTPase activity, therefore promoting FtsZ assembly into bundles of protofilaments necessary for the formation of the division Z ring. It is recruited early at mid-cell but it is not essential for cell division. In Bacillus thuringiensis (strain Al Hakam), this protein is Cell division protein ZapA.